The chain runs to 215 residues: Protein C' (215 aa).

2 disordered regions span residues methionine 12–arginine 34 and serine 51–proline 71. An involved in self-degradation and in host STAT1 degradation region spans residues phenylalanine 15–leucine 22. Positions serine 51–proline 65 are enriched in polar residues.

This sequence belongs to the respirovirus protein C family. The different isoforms interact (via C-terminus) with unphosphorylated and phosphorylated human STAT1 (via N-terminus), favoring the formation of parallel STAT1 homodimers. The different isoforms do not interact with host STAT2. C protein interacts with L protein; this interaction has an inhibitory effect on viral transcription and replication. Post-translationally, Y1 and Y2 proteins are produced not only by alternative initiation, but also by proteolytic cleavage of C'. Only alternative initiation is detected in vitro, whereas in vivo cleavage seems to be predominant.

The protein localises to the host cytoplasm. Its function is as follows. The different products prevent the establishment of cellular antiviral state by blocking the interferon-alpha/beta (IFN-alpha/beta) and IFN-gamma signaling pathways. They inhibit IFN-alpha/beta induced tyrosine phosphorylation of STAT1 and STAT2. Blocking the IFN-alpha/beta pathway requires binding to STAT1 in the cytoplasm. They inhibit IFN-gamma induced serine phosphorylation of STAT1. Block the IFN-gamma pathway by binding to and stabilizing the parallel form of the STAT1 dimer, further inducing high-molecular-weight complex formation and inhibition of transcription by IFN-gamma. May also have a role in preventing the cell to enter apoptosis. Modulate regulation of viral transcription and replication. Overexpression inhibits the viral RNA polymerase. The absence of all C', C, Y1 and Y2 proteins leads to viral delayed growth. Plays an important role in virion particles release. Modulates virion shape. The protein is Protein C' (P/V/C) of Sendai virus (strain Harris) (SeV).